The sequence spans 321 residues: uncharacterized protein (321 aa).

A compositionally biased stretch (basic and acidic residues) spans Met1–Val12. A disordered region spans residues Met1–Glu85. The segment covering Asn53–Arg67 has biased composition (polar residues).

This is an uncharacterized protein from Rattus norvegicus (Rat).